Consider the following 1394-residue polypeptide: Kinesin-like protein KIF27 (1394 aa).

One can recognise a Kinesin motor domain in the interval 5–341; sequence PIKVAVRIRP…LKYANRARNI (337 aa). Residue 84-91 participates in ATP binding; that stretch reads GQTGSGKT. 2 coiled-coil regions span residues 352 to 418 and 498 to 554; these read QADR…IEQA and QKDL…ELAK. Disordered stretches follow at residues 559–582 and 642–665; these read VPTS…RPHT and FSDN…RSHS. Residues 571 to 580 show a composition bias toward basic and acidic residues; it reads PDARASEKRP. Serine 643, serine 646, serine 672, serine 675, and serine 704 each carry phosphoserine. 4 coiled-coil regions span residues 709 to 891, 921 to 1078, 1118 to 1152, and 1186 to 1226; these read LQKL…GQGE, LDEQ…SIQS, NKVI…HELE, and DQDG…RLKD. Positions 886–916 are disordered; it reads KAGQGEGLNPKAEDQDGFNLNRRKSPFRSGD. Serine 999 carries the phosphoserine modification. Residues 1267–1280 show a composition bias toward basic and acidic residues; the sequence is TENTKLNGSEREVD. Disordered regions lie at residues 1267-1319 and 1325-1344; these read TENT…LQSI and ARPF…PVRS. 2 stretches are compositionally biased toward polar residues: residues 1281-1295 and 1309-1319; these read NSSS…TQQI and IAPSSGQLQSI. Phosphoserine is present on residues serine 1365 and serine 1387.

The protein belongs to the TRAFAC class myosin-kinesin ATPase superfamily. Kinesin family. KIF27 subfamily. Interacts with STK36.

The protein localises to the cytoplasm. The protein resides in the cytoskeleton. It localises to the cell projection. It is found in the cilium. In terms of biological role, plays an essential role in motile ciliogenesis. This is Kinesin-like protein KIF27 (Kif27) from Mus musculus (Mouse).